Here is a 358-residue protein sequence, read N- to C-terminus: UDP-N-acetylglucosamine--N-acetylmuramyl-(pentapeptide) pyrophosphoryl-undecaprenol N-acetylglucosamine transferase (358 aa).

Residues 12–14 (TGG), N124, R162, S185, I242, 261–266 (ALTVSE), and Q287 each bind UDP-N-acetyl-alpha-D-glucosamine.

It belongs to the glycosyltransferase 28 family. MurG subfamily.

The protein localises to the cell inner membrane. It carries out the reaction di-trans,octa-cis-undecaprenyl diphospho-N-acetyl-alpha-D-muramoyl-L-alanyl-D-glutamyl-meso-2,6-diaminopimeloyl-D-alanyl-D-alanine + UDP-N-acetyl-alpha-D-glucosamine = di-trans,octa-cis-undecaprenyl diphospho-[N-acetyl-alpha-D-glucosaminyl-(1-&gt;4)]-N-acetyl-alpha-D-muramoyl-L-alanyl-D-glutamyl-meso-2,6-diaminopimeloyl-D-alanyl-D-alanine + UDP + H(+). Its pathway is cell wall biogenesis; peptidoglycan biosynthesis. Its function is as follows. Cell wall formation. Catalyzes the transfer of a GlcNAc subunit on undecaprenyl-pyrophosphoryl-MurNAc-pentapeptide (lipid intermediate I) to form undecaprenyl-pyrophosphoryl-MurNAc-(pentapeptide)GlcNAc (lipid intermediate II). This chain is UDP-N-acetylglucosamine--N-acetylmuramyl-(pentapeptide) pyrophosphoryl-undecaprenol N-acetylglucosamine transferase, found in Pseudoalteromonas translucida (strain TAC 125).